We begin with the raw amino-acid sequence, 275 residues long: MATELEYESVLCVKPDVSVYRIPPRASNRGYRASDWKLDQPDWTGRLRITSKGKTAYIKLEDKVSGELFAQAPVEQYPGIAVETVTDSSRYFVIRIQDGTGRSAFIGIGFTDRGDAFDFNVSLQDHFKWVKQESEISKESQEMDARPKLDLGFKEGQTIKLCIGNITNKKGGASKPRTARGGGLSLLPPPPGGKVTIPPPSSSVAISNHVTPPPIPKSNHGGSDADILLDLDSPAPVTTPAPTPVSVSNDLWGDFSTASSSVPNQAPQPSNWVQF.

The disordered stretch occupies residues 170–191; sequence KGGASKPRTARGGGLSLLPPPP. Arg-180 carries the post-translational modification Omega-N-methylarginine. Thr-211 carries the post-translational modification Phosphothreonine. 2 consecutive short sequence motifs (WXXF motif) follow at residues 252–255 and 272–275; these read WGDF and WVQF. Residues 254–275 are disordered; that stretch reads DFSTASSSVPNQAPQPSNWVQF. The span at 256–275 shows a compositional bias: polar residues; that stretch reads STASSSVPNQAPQPSNWVQF.

This sequence belongs to the NECAP family. In terms of assembly, interacts with AP1G1 and AP2A1 components of the adapter protein complexes AP-1 and AP-2. Interacts with the GAE domain proteins GGA1, GGA2 and GGA3.

The protein resides in the cytoplasmic vesicle. The protein localises to the clathrin-coated vesicle membrane. Its subcellular location is the cell membrane. Its function is as follows. Involved in endocytosis. The chain is Adaptin ear-binding coat-associated protein 1 (NECAP1) from Homo sapiens (Human).